The following is a 30-amino-acid chain: ACVPVYKECWYPQKPCCEDRVCQCSFGMTN.

2 disulfides stabilise this stretch: cysteine 2–cysteine 17 and cysteine 9–cysteine 22.

As to expression, expressed by the venom gland.

The protein localises to the secreted. Its function is as follows. Antagonist of L-type calcium channels (Cav1/CACNA1). The protein is U10-ctenitoxin-Co1b of Ctenus ornatus (Brazilian spider).